Reading from the N-terminus, the 35-residue chain is Conotoxin Ca15a (35 aa).

Proline 8 carries the post-translational modification 4-hydroxyproline.

In terms of processing, contains 4 disulfide bonds. As to expression, expressed by the venom duct.

It is found in the secreted. The chain is Conotoxin Ca15a from Conus caracteristicus (Characteristic cone).